Consider the following 892-residue polypeptide: Alpha-actinin-1 (892 aa).

M1 carries the post-translational modification N-acetylmethionine. Residues 1 to 247 form an actin-binding region; sequence MDHYDSQQTN…IMTYVSSFYH (247 aa). A Phosphoserine modification is found at S6. At Y12 the chain carries Phosphotyrosine; by FAK1. Calponin-homology (CH) domains are found at residues 31-135 and 144-250; these read KQQR…LRFA and TSAK…HAFS. K95 and K195 each carry N6-acetyllysine. 4 Spectrin repeats span residues 274–384, 394–499, 509–620, and 630–733; these read QLME…WLLN, HLAE…ALER, QLYL…ALTE, and RLRK…EVEN. The interaction with DDN stretch occupies residues 274–733; the sequence is QLMEDYEKLA…IARTINEVEN (460 aa). Position 471 is a phosphoserine (S471). An N6-acetyllysine modification is found at K676. S677 bears the Phosphoserine mark. EF-hand domains follow at residues 746–781 and 787–822; these read EQMN…LGYD and QGEA…ETAD. Positions 759, 761, 763, 765, and 770 each coordinate Ca(2+). S890 is modified (phosphoserine).

It belongs to the alpha-actinin family. In terms of assembly, homodimer; antiparallel. Interacts with MYOZ2, TTID and LPP. Interacts with DDN. Interacts with PSD. Interacts with MICALL2. Interacts with DNM2 and CTTN. Interacts with PDLIM1. Interacts with PDLIM2. Interacts with PDLIM4 (via PDZ domain). Interacts with IGSF8.

It is found in the cytoplasm. The protein localises to the cytoskeleton. It localises to the myofibril. Its subcellular location is the sarcomere. The protein resides in the z line. It is found in the cell membrane. The protein localises to the cell junction. It localises to the cell projection. Its subcellular location is the ruffle. Functionally, F-actin cross-linking protein which is thought to anchor actin to a variety of intracellular structures. Association with IGSF8 regulates the immune synapse formation and is required for efficient T-cell activation. This Rattus norvegicus (Rat) protein is Alpha-actinin-1 (Actn1).